The primary structure comprises 64 residues: Large ribosomal subunit protein bL35 (64 aa).

The segment at 1–28 (MPKVKTKSGAKKRFKLTGSGKIKRKSAY) is disordered.

This sequence belongs to the bacterial ribosomal protein bL35 family.

In Cytophaga hutchinsonii (strain ATCC 33406 / DSM 1761 / CIP 103989 / NBRC 15051 / NCIMB 9469 / D465), this protein is Large ribosomal subunit protein bL35.